Reading from the N-terminus, the 301-residue chain is Probable alpha-L-glutamate ligase (301 aa).

The region spanning 104–287 is the ATP-grasp domain; sequence LQLLSRKGIG…VAGIIIEYLE (184 aa). ATP-binding positions include lysine 141, 178-179, aspartate 187, and 211-213; these read EY and RSN. The Mg(2+) site is built by aspartate 248, glutamate 260, and asparagine 262. Mn(2+) is bound by residues aspartate 248, glutamate 260, and asparagine 262.

This sequence belongs to the RimK family. Mg(2+) is required as a cofactor. It depends on Mn(2+) as a cofactor.

In Azotobacter vinelandii (strain DJ / ATCC BAA-1303), this protein is Probable alpha-L-glutamate ligase.